The primary structure comprises 385 residues: Lipid-A-disaccharide synthase 2 (385 aa).

The protein belongs to the LpxB family.

It catalyses the reaction a lipid X + a UDP-2-N,3-O-bis[(3R)-3-hydroxyacyl]-alpha-D-glucosamine = a lipid A disaccharide + UDP + H(+). It functions in the pathway bacterial outer membrane biogenesis; LPS lipid A biosynthesis. Functionally, condensation of UDP-2,3-diacylglucosamine and 2,3-diacylglucosamine-1-phosphate to form lipid A disaccharide, a precursor of lipid A, a phosphorylated glycolipid that anchors the lipopolysaccharide to the outer membrane of the cell. This is Lipid-A-disaccharide synthase 2 from Legionella pneumophila subsp. pneumophila (strain Philadelphia 1 / ATCC 33152 / DSM 7513).